Here is a 308-residue protein sequence, read N- to C-terminus: MDPEVSLLLLCPLGGLSQEQVAVELSPAHDRRPLPGGDKAITAIWETRQQAQPWIFDAPKFRLHSATLVSSSPEPQLLLHLGLTSYRDFLGTNWSSSASWLRQQGAADWGDKQAYLADPLGVGAALVTADDFLVFLRRSQQVAEAPGLVDVPGGHPEPQALCSGGIPRHKDLPGLLVVRELFSSVLQEICDEVNLPLHTLSQPLLLGIACNETSAGRASAEFYVQCSLTSEEVRSYYLSGGPEAHESTGIIFVETQRVQRLQETEMWAQLCPSAKGAILLYNRHPPLQSGVGKSHLSHPSAPALSLQL.

The substrate site is built by Phe-56, Tyr-86, Arg-138, Ala-143, Asp-150, His-155, and Glu-157. One can recognise a Nudix hydrolase domain in the interval 117–284; the sequence is ADPLGVGAAL…KGAILLYNRH (168 aa). The Nudix box motif lies at 174-195; the sequence is GLLVVRELFSSVLQEICDEVNL. Glu-188 and Glu-192 together coordinate Mg(2+). Ser-273 is a binding site for substrate.

Belongs to the Nudix hydrolase family. Mg(2+) is required as a cofactor.

It catalyses the reaction UDP-sugar + H2O = UMP + alpha-D-aldose 1-phosphate.. In terms of biological role, hydrolyzes UDP-glucose to glucose 1-phosphate and UMP and UDP-galactose to galactose 1-phosphate and UMP. Preferred substrate is UDP-glucose. The chain is Uridine diphosphate glucose pyrophosphatase NUDT22 (Nudt22) from Mus musculus (Mouse).